A 230-amino-acid polypeptide reads, in one-letter code: Orotidine 5'-phosphate decarboxylase (230 aa).

Residues D8, K32, 59-68 (DLKLYDIPNT), T118, R178, Q187, G207, and R208 contribute to the substrate site. K61 (proton donor) is an active-site residue.

Belongs to the OMP decarboxylase family. Type 1 subfamily. In terms of assembly, homodimer.

The catalysed reaction is orotidine 5'-phosphate + H(+) = UMP + CO2. Its pathway is pyrimidine metabolism; UMP biosynthesis via de novo pathway; UMP from orotate: step 2/2. Functionally, catalyzes the decarboxylation of orotidine 5'-monophosphate (OMP) to uridine 5'-monophosphate (UMP). The polypeptide is Orotidine 5'-phosphate decarboxylase (Nautilia profundicola (strain ATCC BAA-1463 / DSM 18972 / AmH)).